A 284-amino-acid chain; its full sequence is MEAIKKKMQMLKLDKENAIDRAEQAEADKKQAEDRCKQLEEEQQGLQKKLKGTEDEVEKYSESVKEAQEKLEQAEKKATDAEAEVASLNRRIQLVEEELDRAQERLATALQKLEEAEKAADESERGMKVIENRAMKDEEKMELQEMQLKEAKHIAEEADRKYEEVARKLVVLEGELERSEERAEVAESKCGDLEEELKIVTNNLKSLEAQADKYSTKEDKYEEEIKLLGEKLKEAETRAEFAERSVAKLEKTIDDLEDEVYAQKMKYKAISEELDNALNDITSL.

M1 is modified (N-acetylmethionine). Residues 1–284 adopt a coiled-coil conformation; it reads MEAIKKKMQM…DNALNDITSL (284 aa). Basic and acidic residues-rich tracts occupy residues 22–40 and 51–66; these read AEQAEADKKQAEDRCKQLE and KGTEDEVEKYSESVKE. The disordered stretch occupies residues 22-66; sequence AEQAEADKKQAEDRCKQLEEEQQGLQKKLKGTEDEVEKYSESVKE.

Belongs to the tropomyosin family. Homodimer. Heterodimer of an alpha (TPM1, TPM3 or TPM4) and a beta (TPM2) chain.

Its subcellular location is the cytoplasm. The protein resides in the cytoskeleton. Functionally, binds to actin filaments in muscle and non-muscle cells. Plays a central role, in association with the troponin complex, in the calcium dependent regulation of vertebrate striated muscle contraction. Smooth muscle contraction is regulated by interaction with caldesmon. In non-muscle cells is implicated in stabilizing cytoskeleton actin filaments. The protein is Tropomyosin beta chain (TPM2) of Gallus gallus (Chicken).